The sequence spans 491 residues: Glutamate--tRNA ligase (491 aa).

Positions 13 to 23 (PSPTGFLHIGN) match the 'HIGH' region motif. 4 residues coordinate Zn(2+): cysteine 110, cysteine 112, cysteine 137, and histidine 139. A 'KMSKS' region motif is present at residues 254–258 (KLSKR). Lysine 257 is a binding site for ATP.

It belongs to the class-I aminoacyl-tRNA synthetase family. Glutamate--tRNA ligase type 1 subfamily. As to quaternary structure, monomer. It depends on Zn(2+) as a cofactor.

Its subcellular location is the cytoplasm. The catalysed reaction is tRNA(Glu) + L-glutamate + ATP = L-glutamyl-tRNA(Glu) + AMP + diphosphate. Catalyzes the attachment of glutamate to tRNA(Glu) in a two-step reaction: glutamate is first activated by ATP to form Glu-AMP and then transferred to the acceptor end of tRNA(Glu). This chain is Glutamate--tRNA ligase, found in Listeria innocua serovar 6a (strain ATCC BAA-680 / CLIP 11262).